Reading from the N-terminus, the 228-residue chain is Glucose-induced degradation protein 8 homolog (228 aa).

The LisH domain maps to 29–61; that stretch reads SKSDLNKLVMNYLVIEGYQEAAAKFQEESSTQT. A CTLH domain is found at 67–124; sequence SIADRMAIRSAIQCGDVEKGIEIVNDLNPEILDTNPQLYFHLQQQKLIELIRKGMTAE.

This sequence belongs to the GID8 family.

It localises to the cytoplasm. Its subcellular location is the nucleus. Its function is as follows. Core component of the CTLH E3 ubiquitin-protein ligase complex that mediates ubiquitination and subsequent proteasomal degradation of target proteins. Acts as a positive regulator of Wnt signaling pathway by promoting beta-catenin (CTNNB1) nuclear accumulation. This is Glucose-induced degradation protein 8 homolog from Dictyostelium discoideum (Social amoeba).